Reading from the N-terminus, the 47-residue chain is PhoP/PhoQ regulator MgrB (47 aa).

A helical transmembrane segment spans residues 6–26 (WVILIIVALVCLLLWAQVFNI).

Belongs to the MgrB family. May form homooligomers. Probably interacts with the periplasmic domain of PhoQ.

The protein localises to the cell inner membrane. In terms of biological role, phoP-regulated transcription is redox-sensitive, being activated when the periplasm becomes more reducing. MgrB acts between DsbA/DsbB and PhoP/PhoQ in this pathway. Represses PhoP/PhoQ signaling, possibly by binding to the periplasmic domain of PhoQ, altering its activity and that of downstream effector PhoP. In Citrobacter koseri (strain ATCC BAA-895 / CDC 4225-83 / SGSC4696), this protein is PhoP/PhoQ regulator MgrB.